A 73-amino-acid chain; its full sequence is Dipeptidyl peptidase 3 (73 aa).

This sequence belongs to the peptidase M49 family. Requires Zn(2+) as cofactor.

Its subcellular location is the membrane. It catalyses the reaction Release of an N-terminal dipeptide from a peptide comprising four or more residues, with broad specificity. Also acts on dipeptidyl 2-naphthylamides.. Functionally, degrades neuropeptide proctolin (RYLPT) by cleavage between Tyr and Leu residues. This Blaberus craniifer (Death's head cockroach) protein is Dipeptidyl peptidase 3.